Consider the following 961-residue polypeptide: FYVE, RhoGEF and PH domain-containing protein 1 (961 aa).

A compositionally biased stretch (gly residues) spans 1-11 (MHGHRAPGGAG). Positions 1–353 (MHGHRAPGGA…DEEEEEEKDR (353 aa)) are disordered. Low complexity predominate over residues 27-38 (PPACADSDPGAS). Ser48 is modified (phosphoserine). Positions 125–135 (PHPEGPQRLRS) are enriched in basic and acidic residues. Composition is skewed to pro residues over residues 156–165 (GPKPQVPPKP) and 172–190 (RMPP…PLPA). An SH3-binding motif is present at residues 171 to 187 (PRMPPPLEPIPPPPSRP). The span at 199–213 (APRAEASPSSAAVSS) shows a compositional bias: low complexity. Phosphoserine is present on Ser205. Positions 231–255 (VPGPSPGPPEPVMLPQPTSQPPVPQ) are enriched in pro residues. A compositionally biased stretch (basic and acidic residues) spans 273–284 (RDGEKVPNRDSG). 2 stretches are compositionally biased toward low complexity: residues 285 to 294 (IDSISSPSNS) and 316 to 325 (ALASVPVALA). Positions 335–351 (VDSDLEEEDDEEEEEEK) are enriched in acidic residues. A DH domain is found at 373–561 (KVFHIANELL…ATAAEHSNAA (189 aa)). Residues 590–689 (ELIKEGHILK…WVQAINSTLL (100 aa)) form the PH 1 domain. The tract at residues 702 to 726 (NSTNREDEDTPPNSPNVDLGKRAPT) is disordered. Residue Thr711 is modified to Phosphothreonine. Residue Ser715 is modified to Phosphoserine. The FYVE-type zinc-finger motif lies at 730 to 790 (EKEVTMCMRC…VCTDCYVALH (61 aa)). Zn(2+)-binding residues include Cys736, Cys739, Cys753, Cys756, Cys761, Cys764, Cys782, and Cys785. The PH 2 domain maps to 821–921 (NSVICSFLHY…WMAVLGRAGR (101 aa)). The interval 925–961 (FCPGPTLSEDREMEEAPVAALGATAEPPESPQTRDKT) is disordered.

In terms of assembly, interacts with DBNL/ABP1 and CTTN. May interact with CCPG1. Binds CDC42. In terms of tissue distribution, expressed in fetal heart, brain, lung, kidney and placenta. Less expressed in liver; adult heart, brain, lung, pancreas and skeletal muscle.

Its subcellular location is the cytoplasm. The protein resides in the cell projection. The protein localises to the lamellipodium. It localises to the ruffle. It is found in the cytoskeleton. Functionally, activates CDC42, a member of the Ras-like family of Rho- and Rac proteins, by exchanging bound GDP for free GTP. Plays a role in regulating the actin cytoskeleton and cell shape. The protein is FYVE, RhoGEF and PH domain-containing protein 1 (FGD1) of Homo sapiens (Human).